A 674-amino-acid polypeptide reads, in one-letter code: DNA ligase (674 aa).

Residues 35-39 (DFEFD), 84-85 (SL), and E118 each bind NAD(+). K120 acts as the N6-AMP-lysine intermediate in catalysis. NAD(+) is bound by residues R141, E184, K297, and K321. Residues C415, C418, C433, and C439 each coordinate Zn(2+). In terms of domain architecture, BRCT spans 598–674 (QVNRNFEGVT…VSEDEFEAML (77 aa)).

It belongs to the NAD-dependent DNA ligase family. LigA subfamily. Requires Mg(2+) as cofactor. The cofactor is Mn(2+).

The catalysed reaction is NAD(+) + (deoxyribonucleotide)n-3'-hydroxyl + 5'-phospho-(deoxyribonucleotide)m = (deoxyribonucleotide)n+m + AMP + beta-nicotinamide D-nucleotide.. Functionally, DNA ligase that catalyzes the formation of phosphodiester linkages between 5'-phosphoryl and 3'-hydroxyl groups in double-stranded DNA using NAD as a coenzyme and as the energy source for the reaction. It is essential for DNA replication and repair of damaged DNA. The sequence is that of DNA ligase from Pelodictyon phaeoclathratiforme (strain DSM 5477 / BU-1).